Reading from the N-terminus, the 308-residue chain is Phosphate transport system permease protein PstA 1 (308 aa).

Transmembrane regions (helical) follow at residues Phe36 to Ile56, Ala96 to Glu116, Val132 to Thr152, Phe155 to Val175, Ile204 to Ile224, and Trp276 to Ile296. Positions Leu89–Arg297 constitute an ABC transmembrane type-1 domain.

The protein belongs to the binding-protein-dependent transport system permease family. CysTW subfamily. As to quaternary structure, the complex is composed of two ATP-binding proteins (PstB), two transmembrane proteins (PstC and PstA) and a solute-binding protein (PstS).

Its subcellular location is the cell membrane. Its function is as follows. Part of the binding-protein-dependent transport system for phosphate; probably responsible for the translocation of the substrate across the membrane. This is Phosphate transport system permease protein PstA 1 (pstA1) from Mycobacterium tuberculosis (strain ATCC 25618 / H37Rv).